A 245-amino-acid polypeptide reads, in one-letter code: S-methyl-5'-thioinosine phosphorylase (245 aa).

Residues T10 and 52-53 (RH) contribute to the phosphate site. M185 provides a ligand contact to substrate. T186 contributes to the phosphate binding site. 209–211 (NPA) contributes to the substrate binding site.

Belongs to the PNP/MTAP phosphorylase family. MTAP subfamily. Homotrimer.

It catalyses the reaction S-methyl-5'-thioinosine + phosphate = 5-(methylsulfanyl)-alpha-D-ribose 1-phosphate + hypoxanthine. It participates in purine metabolism; purine nucleoside salvage. Its function is as follows. Catalyzes the reversible phosphorylation of S-methyl-5'-thioinosine (MTI) to hypoxanthine and 5-methylthioribose-1-phosphate. Involved in the breakdown of S-methyl-5'-thioadenosine (MTA), a major by-product of polyamine biosynthesis. Catabolism of (MTA) occurs via deamination to MTI and phosphorolysis to hypoxanthine. Involved in quorum sensing. The polypeptide is S-methyl-5'-thioinosine phosphorylase (Pseudomonas aeruginosa (strain ATCC 15692 / DSM 22644 / CIP 104116 / JCM 14847 / LMG 12228 / 1C / PRS 101 / PAO1)).